The primary structure comprises 214 residues: MKLNIAILLAALAATASASPAGDISEVAVDADASELLVDPRAELPVAPRASFFIDARQDTNGTSQDEIDQWLTAHNDERAQHGPVPLVWNQDLQNAAMSWASRCVYKHNRGGQNIAARYNTRANFPREIDRAVGQWNNERGEYNATTFKGAGHWTQVVWKHSRNLGCAAYSCPQGTLGKKPGDKWKSLWYYVCNYDPKGNVVPASKYYPSNVQP.

The signal sequence occupies residues 1-18 (MKLNIAILLAALAATASA). N-linked (GlcNAc...) asparagine glycans are attached at residues Asn61 and Asn144. The region spanning 72–195 (LTAHNDERAQ…KSLWYYVCNY (124 aa)) is the SCP domain.

Belongs to the CRISP family.

Its subcellular location is the secreted. This Schizophyllum commune (Split gill fungus) protein is Fruiting body protein SC14 (SC14).